The following is a 286-amino-acid chain: Bifunctional protein FolD (286 aa).

Residues 170–172 (GHS) and Ile236 each bind NADP(+).

This sequence belongs to the tetrahydrofolate dehydrogenase/cyclohydrolase family. As to quaternary structure, homodimer.

It carries out the reaction (6R)-5,10-methylene-5,6,7,8-tetrahydrofolate + NADP(+) = (6R)-5,10-methenyltetrahydrofolate + NADPH. The catalysed reaction is (6R)-5,10-methenyltetrahydrofolate + H2O = (6R)-10-formyltetrahydrofolate + H(+). It functions in the pathway one-carbon metabolism; tetrahydrofolate interconversion. Its function is as follows. Catalyzes the oxidation of 5,10-methylenetetrahydrofolate to 5,10-methenyltetrahydrofolate and then the hydrolysis of 5,10-methenyltetrahydrofolate to 10-formyltetrahydrofolate. This chain is Bifunctional protein FolD, found in Methanococcoides burtonii (strain DSM 6242 / NBRC 107633 / OCM 468 / ACE-M).